A 513-amino-acid chain; its full sequence is Protein PNS1 (513 aa).

Residues methionine 1–proline 13 show a composition bias toward pro residues. The segment at methionine 1 to glutamine 41 is disordered. Over methionine 1–tryptophan 60 the chain is Cytoplasmic. A helical transmembrane segment spans residues proline 61–leucine 81. Residues asparagine 82–threonine 108 are Extracellular-facing. N-linked (GlcNAc...) asparagine glycosylation occurs at asparagine 97. The helical transmembrane segment at isoleucine 109 to tyrosine 129 threads the bilayer. Residues alanine 130–valine 136 are Cytoplasmic-facing. A helical membrane pass occupies residues phenylalanine 137–phenylalanine 157. The Extracellular portion of the chain corresponds to valine 158 to serine 163. Residues alanine 164–cysteine 182 traverse the membrane as a helical segment. The Cytoplasmic segment spans residues arginine 183 to serine 210. The helical transmembrane segment at phenylalanine 211–threonine 231 threads the bilayer. Residues tyrosine 232–glutamine 251 are Extracellular-facing. A helical membrane pass occupies residues serine 252–isoleucine 272. Residues lysine 273 to alanine 309 lie on the Cytoplasmic side of the membrane. Residues methionine 310–isoleucine 330 form a helical membrane-spanning segment. At arginine 331 to aspartate 346 the chain is on the extracellular side. Residues asparagine 347 to valine 367 form a helical membrane-spanning segment. The Cytoplasmic segment spans residues arginine 368–threonine 412. Residues serine 413 to leucine 433 form a helical membrane-spanning segment. Over lysine 434–glutamine 460 the chain is Extracellular. Asparagine 441 carries N-linked (GlcNAc...) asparagine glycosylation. The chain crosses the membrane as a helical span at residues isoleucine 461–alanine 481. Over lysine 482–histidine 513 the chain is Cytoplasmic.

The protein belongs to the CTL (choline transporter-like) family.

It localises to the cell membrane. Functionally, probably involved in transport through the plasma membrane. The chain is Protein PNS1 (PNS1) from Debaryomyces hansenii (strain ATCC 36239 / CBS 767 / BCRC 21394 / JCM 1990 / NBRC 0083 / IGC 2968) (Yeast).